A 456-amino-acid polypeptide reads, in one-letter code: Mitochondrial import inner membrane translocase subunit TIM50 (456 aa).

The N-terminal 22 residues, 1–22 (MSLSKLSQKCFSRHHARTFIRF), are a transit peptide targeting the mitochondrion. The Mitochondrial matrix segment spans residues 23 to 171 (SSSDFQSLLG…RRKRMERNTR (149 aa)). 2 disordered regions span residues 101–120 (ETEK…AIDE) and 132–165 (EEAA…RRKR). A compositionally biased stretch (polar residues) spans 137–153 (SKTSAPSGSSGDNNDQP). Residues 172 to 192 (IGGYVLLGGSVIGFISFCFYY) traverse the membrane as a helical segment. At 193–456 (GRAQRDEAGN…LFGFRRHASA (264 aa)) the chain is on the mitochondrial intermembrane side. The FCP1 homology domain maps to 247–391 (YLQPKYTIVI…VDLAELLKTI (145 aa)).

The protein belongs to the TIM50 family. Component of the TIM23 complex at least composed of tim-23, tim-17 and tim-50.

The protein localises to the mitochondrion inner membrane. Essential component of the TIM23 complex, a complex that mediates the translocation of transit peptide-containing proteins across the mitochondrial inner membrane. The sequence is that of Mitochondrial import inner membrane translocase subunit TIM50 (scpl-4) from Caenorhabditis briggsae.